Here is a 459-residue protein sequence, read N- to C-terminus: Ribulose bisphosphate carboxylase (459 aa).

A substrate-binding site is contributed by asparagine 111. Lysine 166 (proton acceptor) is an active-site residue. Position 168 (lysine 168) interacts with substrate. The Mg(2+) site is built by lysine 191, aspartate 193, and glutamate 194. Residue lysine 191 is modified to N6-carboxylysine. Histidine 287 serves as the catalytic Proton acceptor. 3 residues coordinate substrate: arginine 288, histidine 321, and serine 368.

Belongs to the RuBisCO large chain family. Type II subfamily. Homodimer. It depends on Mg(2+) as a cofactor.

It catalyses the reaction 2 (2R)-3-phosphoglycerate + 2 H(+) = D-ribulose 1,5-bisphosphate + CO2 + H2O. The enzyme catalyses D-ribulose 1,5-bisphosphate + O2 = 2-phosphoglycolate + (2R)-3-phosphoglycerate + 2 H(+). In terms of biological role, ruBisCO catalyzes two reactions: the carboxylation of D-ribulose 1,5-bisphosphate, the primary event in carbon dioxide fixation, as well as the oxidative fragmentation of the pentose substrate. Both reactions occur simultaneously and in competition at the same active site. The polypeptide is Ribulose bisphosphate carboxylase (Dechloromonas aromatica (strain RCB)).